The sequence spans 268 residues: DNA repair protein RecO (268 aa).

Belongs to the RecO family.

Its function is as follows. Involved in DNA repair and RecF pathway recombination. This is DNA repair protein RecO from Parasynechococcus marenigrum (strain WH8102).